A 468-amino-acid chain; its full sequence is ATP synthase subunit beta 2 (468 aa).

Position 145-152 (145-152) interacts with ATP; the sequence is GGAGVGKT.

The protein belongs to the ATPase alpha/beta chains family. As to quaternary structure, F-type ATPases have 2 components, CF(1) - the catalytic core - and CF(0) - the membrane proton channel. CF(1) has five subunits: alpha(3), beta(3), gamma(1), delta(1), epsilon(1). CF(0) has three main subunits: a(1), b(2) and c(9-12). The alpha and beta chains form an alternating ring which encloses part of the gamma chain. CF(1) is attached to CF(0) by a central stalk formed by the gamma and epsilon chains, while a peripheral stalk is formed by the delta and b chains.

The protein localises to the cell membrane. The enzyme catalyses ATP + H2O + 4 H(+)(in) = ADP + phosphate + 5 H(+)(out). Its function is as follows. Produces ATP from ADP in the presence of a proton gradient across the membrane. The catalytic sites are hosted primarily by the beta subunits. This chain is ATP synthase subunit beta 2, found in Mycoplasmopsis pulmonis (strain UAB CTIP) (Mycoplasma pulmonis).